Here is a 236-residue protein sequence, read N- to C-terminus: 5'-methylthioadenosine/S-adenosylhomocysteine nucleosidase (236 aa).

Glu12 (proton acceptor) is an active-site residue. Substrate contacts are provided by residues Gly78, Ile153, and 174-175; that span reads ME. Asp198 serves as the catalytic Proton donor.

Belongs to the PNP/UDP phosphorylase family. MtnN subfamily.

It catalyses the reaction S-adenosyl-L-homocysteine + H2O = S-(5-deoxy-D-ribos-5-yl)-L-homocysteine + adenine. It carries out the reaction S-methyl-5'-thioadenosine + H2O = 5-(methylsulfanyl)-D-ribose + adenine. The enzyme catalyses 5'-deoxyadenosine + H2O = 5-deoxy-D-ribose + adenine. It functions in the pathway amino-acid biosynthesis; L-methionine biosynthesis via salvage pathway; S-methyl-5-thio-alpha-D-ribose 1-phosphate from S-methyl-5'-thioadenosine (hydrolase route): step 1/2. Catalyzes the irreversible cleavage of the glycosidic bond in both 5'-methylthioadenosine (MTA) and S-adenosylhomocysteine (SAH/AdoHcy) to adenine and the corresponding thioribose, 5'-methylthioribose and S-ribosylhomocysteine, respectively. Also cleaves 5'-deoxyadenosine, a toxic by-product of radical S-adenosylmethionine (SAM) enzymes, into 5-deoxyribose and adenine. The protein is 5'-methylthioadenosine/S-adenosylhomocysteine nucleosidase of Shewanella baltica (strain OS185).